The primary structure comprises 254 residues: MEKKAVIITGGSSGMGKAMAKKQAELGWHVMVTGRNHEALEETKKEIQTFEGQVACFQMDVRSDSAASDMIKEAVKAFGRLDALINNAAGNFICPAEKLTPNGWKAVIEIVLNGTFFCSQAAARHWIDQKQQGVILNMAATYAWGAGAGVVHSAAAKAGVLSLTRTLAVEWGSKYGIRTNAIAPGPIERTGGAEKLFESEKAMARTMNSVPLGRLGTPEEIAALAAFLLSDEASYINGDCITMDGGQWLNPYPF.

6–38 (VIITGGSSGMGKAMAKKQAELGWHVMVTGRNHE) contacts NADP(+). Residue Thr100 participates in substrate binding. Catalysis depends on Tyr142, which acts as the Proton acceptor. Lys157 contacts NAD(+).

Belongs to the short-chain dehydrogenases/reductases (SDR) family. 2,4-dienoyl-CoA reductase subfamily.

The catalysed reaction is a 4,5-saturated-(2E)-enoyl-CoA + NADP(+) = a (2E,4E)-dienoyl-CoA + NADPH + H(+). It carries out the reaction a (2E,4Z)-dienoyl-CoA + NADPH + H(+) = a 4,5-saturated-(2E)-enoyl-CoA + NADP(+). The protein operates within lipid metabolism; fatty acid beta-oxidation. Auxiliary enzyme of beta-oxidation. It participates in the metabolism of unsaturated fatty enoyl-CoA esters having double bonds in both even- and odd-numbered positions. Catalyzes the NADP-dependent reduction of 2,4-dienoyl-CoA to yield trans-3-enoyl-CoA. This Bacillus subtilis (strain 168) protein is Probable 2,4-dienoyl-CoA reductase [(2E)-enoyl-CoA-producing] (fadH).